The primary structure comprises 492 residues: Cyclic di-GMP phosphodiesterase VC_1295 (492 aa).

The next 6 helical transmembrane spans lie at 14-34, 49-69, 80-100, 111-131, 160-180, and 205-225; these read IYHA…FALY, EIAT…HTLL, FIQL…LYYN, LKVL…LQLS, LIGL…MVAI, and EFAF…VLWS. The HAMP domain occupies 226-278; it reads RMMKEILDHQERSLQAVTQGNLQVRLPVYSNDELGNVAMLTNQMLDSLEATQN. One can recognise an HD-GYP domain in the interval 280–490; sequence VKTTRDVAIV…FVAIAAHFKD (211 aa).

Its subcellular location is the cell inner membrane. It catalyses the reaction 3',3'-c-di-GMP + 2 H2O = 2 GMP + 2 H(+). In terms of biological role, phosphodiesterase (PDE) that catalyzes the hydrolysis of cyclic diguanylate (c-di-GMP) to GMP in vitro. Increases motility and decreases biofilm formation in vivo. The sequence is that of Cyclic di-GMP phosphodiesterase VC_1295 from Vibrio cholerae serotype O1 (strain ATCC 39315 / El Tor Inaba N16961).